A 130-amino-acid polypeptide reads, in one-letter code: Small ribosomal subunit protein uS9 (130 aa).

The tract at residues 109 to 130 (RAKERKKYGLKAARRAPQFSKR) is disordered. The span at 111 to 130 (KERKKYGLKAARRAPQFSKR) shows a compositional bias: basic residues.

It belongs to the universal ribosomal protein uS9 family.

This Heliobacterium modesticaldum (strain ATCC 51547 / Ice1) protein is Small ribosomal subunit protein uS9.